Reading from the N-terminus, the 155-residue chain is Riboflavin synthase (155 aa).

Belongs to the DMRL synthase family.

The enzyme catalyses 2 6,7-dimethyl-8-(1-D-ribityl)lumazine + H(+) = 5-amino-6-(D-ribitylamino)uracil + riboflavin. The protein operates within cofactor biosynthesis; riboflavin biosynthesis; riboflavin from 2-hydroxy-3-oxobutyl phosphate and 5-amino-6-(D-ribitylamino)uracil: step 2/2. The sequence is that of Riboflavin synthase (ribC) from Aeropyrum pernix (strain ATCC 700893 / DSM 11879 / JCM 9820 / NBRC 100138 / K1).